The following is a 143-amino-acid chain: Nuclear transcription factor Y subunit B-4 (143 aa).

A disordered region spans residues 1–23 (MSEGFDGTENGGGGGGGGVGKEQ). Residues 9-20 (ENGGGGGGGGVG) are compositionally biased toward gly residues. Residues 27-33 (LPIANIG) mediate DNA binding. The interval 54–65 (VQECVSEFISFI) is subunit association domain (SAD). Over residues 117–130 (KGSRASELPVKKDV) the composition is skewed to basic and acidic residues. The tract at residues 117–143 (KGSRASELPVKKDVVLNGDPGSSFEGM) is disordered.

Belongs to the NFYB/HAP3 subunit family. As to quaternary structure, heterotrimeric transcription factor composed of three components, NF-YA, NF-YB and NF-YC. NF-YB and NF-YC must interact and dimerize for NF-YA association and DNA binding. Ubiquitous.

The protein localises to the nucleus. Functionally, component of the NF-Y/HAP transcription factor complex. The NF-Y complex stimulates the transcription of various genes by recognizing and binding to a CCAAT motif in promoters. May regulate the expression of photosynthetic genes, and may be involved in chloroplast and amyloplast development. This Oryza sativa subsp. japonica (Rice) protein is Nuclear transcription factor Y subunit B-4 (NFYB4).